Reading from the N-terminus, the 121-residue chain is Putative membrane protein insertion efficiency factor (121 aa).

The disordered stretch occupies residues 97–121 (VPARRDRHAGGRRCCPANVDEQRST).

The protein belongs to the UPF0161 family.

It is found in the cell membrane. Could be involved in insertion of integral membrane proteins into the membrane. The chain is Putative membrane protein insertion efficiency factor from Rhodococcus jostii (strain RHA1).